The following is a 233-amino-acid chain: Orotidine 5'-phosphate decarboxylase (233 aa).

Substrate is bound by residues Asp9, Lys31, 58–67 (DLKLHDIPNT), Thr120, Arg182, Gln191, Gly211, and Arg212. The active-site Proton donor is Lys60.

This sequence belongs to the OMP decarboxylase family. Type 1 subfamily. Homodimer.

It catalyses the reaction orotidine 5'-phosphate + H(+) = UMP + CO2. It participates in pyrimidine metabolism; UMP biosynthesis via de novo pathway; UMP from orotate: step 2/2. Catalyzes the decarboxylation of orotidine 5'-monophosphate (OMP) to uridine 5'-monophosphate (UMP). This Listeria welshimeri serovar 6b (strain ATCC 35897 / DSM 20650 / CCUG 15529 / CIP 8149 / NCTC 11857 / SLCC 5334 / V8) protein is Orotidine 5'-phosphate decarboxylase.